The following is a 37-amino-acid chain: Potassium channel toxin alpha-KTx 2.19 (37 aa).

3 disulfides stabilise this stretch: Cys7–Cys28, Cys13–Cys33, and Cys17–Cys35.

Expressed by the venom gland.

It localises to the secreted. In terms of biological role, inhibitor of voltage-gated potassium channels. This is Potassium channel toxin alpha-KTx 2.19 from Rhopalurus junceus (Caribbean blue scorpion).